The following is a 641-amino-acid chain: Chaperone protein DnaK (641 aa).

A Phosphothreonine; by autocatalysis modification is found at Thr200. The segment covering 605–623 (AAEQGGSADAASGNAQASK) has biased composition (low complexity). The segment at 605 to 627 (AAEQGGSADAASGNAQASKAADD) is disordered.

It belongs to the heat shock protein 70 family.

Its function is as follows. Acts as a chaperone. The sequence is that of Chaperone protein DnaK from Xanthomonas oryzae pv. oryzae (strain MAFF 311018).